We begin with the raw amino-acid sequence, 506 residues long: Maturase K (506 aa).

It belongs to the intron maturase 2 family. MatK subfamily.

It is found in the plastid. Its subcellular location is the chloroplast. In terms of biological role, usually encoded in the trnK tRNA gene intron. Probably assists in splicing its own and other chloroplast group II introns. This chain is Maturase K, found in Prunus persica (Peach).